The following is a 423-amino-acid chain: Enolase (423 aa).

Residue Q163 coordinates (2R)-2-phosphoglycerate. Residue E205 is the Proton donor of the active site. Mg(2+)-binding residues include D242, E285, and D312. The (2R)-2-phosphoglycerate site is built by K337, R366, S367, and K388. Residue K337 is the Proton acceptor of the active site.

Belongs to the enolase family. Mg(2+) serves as cofactor.

It is found in the cytoplasm. The protein resides in the secreted. The protein localises to the cell surface. The catalysed reaction is (2R)-2-phosphoglycerate = phosphoenolpyruvate + H2O. It participates in carbohydrate degradation; glycolysis; pyruvate from D-glyceraldehyde 3-phosphate: step 4/5. In terms of biological role, catalyzes the reversible conversion of 2-phosphoglycerate (2-PG) into phosphoenolpyruvate (PEP). It is essential for the degradation of carbohydrates via glycolysis. The polypeptide is Enolase (Desulforapulum autotrophicum (strain ATCC 43914 / DSM 3382 / VKM B-1955 / HRM2) (Desulfobacterium autotrophicum)).